We begin with the raw amino-acid sequence, 101 residues long: Small ribosomal subunit protein uS14 (101 aa).

Belongs to the universal ribosomal protein uS14 family. Part of the 30S ribosomal subunit. Contacts proteins S3 and S10.

Its function is as follows. Binds 16S rRNA, required for the assembly of 30S particles and may also be responsible for determining the conformation of the 16S rRNA at the A site. This chain is Small ribosomal subunit protein uS14, found in Paraburkholderia phytofirmans (strain DSM 17436 / LMG 22146 / PsJN) (Burkholderia phytofirmans).